The primary structure comprises 356 residues: Galectin-9C (356 aa).

The Galectin 1 domain occupies 17 to 148 (FSGTIQGGLQ…SVQLSYISFQ (132 aa)). Residue 82–88 (WGPEERK) participates in a beta-D-galactoside binding. The disordered stretch occupies residues 170–190 (FPPRPRGRRQKPPSVRPANPA). The region spanning 228-356 (FITTIPGGLY…GDIQLTHVQT (129 aa)) is the Galectin 2 domain. 288-294 (WGSEERS) is a binding site for a beta-D-galactoside.

Functionally, binds galactosides. This chain is Galectin-9C (LGALS9C), found in Homo sapiens (Human).